The following is a 612-amino-acid chain: UvrABC system protein C (612 aa).

Residues 21 to 99 (KLPGVYQMYD…IKSQKPPFNI (79 aa)) form the GIY-YIG domain. The region spanning 209–244 (EVLQQELQVEMEQASQALDFERAVVVRDQITDLRQV) is the UVR domain.

This sequence belongs to the UvrC family. In terms of assembly, interacts with UvrB in an incision complex.

It is found in the cytoplasm. Its function is as follows. The UvrABC repair system catalyzes the recognition and processing of DNA lesions. UvrC both incises the 5' and 3' sides of the lesion. The N-terminal half is responsible for the 3' incision and the C-terminal half is responsible for the 5' incision. The polypeptide is UvrABC system protein C (Saccharophagus degradans (strain 2-40 / ATCC 43961 / DSM 17024)).